The chain runs to 247 residues: HTH-type transcriptional regulator SarU (247 aa).

2 consecutive DNA-binding regions (H-T-H motif) follow at residues 53-76 and 178-201; these read LKEI…SLSK and LKDL…RLNN.

This sequence belongs to the SarA family.

Its subcellular location is the cytoplasm. In terms of biological role, positive regulator of RNAII and RNAIII in a cell density-dependent manner. It can contribute to the expression of virulence genes controlled by agr. May also regulate target genes via an agr-independent pathway. This Staphylococcus aureus (strain COL) protein is HTH-type transcriptional regulator SarU (sarU).